The sequence spans 308 residues: Taste receptor type 2 member 46 (308 aa).

Position 1 (Met-1) is a topological domain, extracellular. The chain crosses the membrane as a helical span at residues Ile-2 to Phe-22. At Ala-23–Gln-46 the chain is on the cytoplasmic side. The chain crosses the membrane as a helical span at residues Ile-47 to Tyr-67. At Ala-68 to Asn-86 the chain is on the extracellular side. The helical transmembrane segment at Val-87–Leu-107 threads the bilayer. Topologically, residues Leu-108–Lys-126 are cytoplasmic. The helical transmembrane segment at Ser-127–Met-147 threads the bilayer. Over Asn-148–Thr-178 the chain is Extracellular. N-linked (GlcNAc...) asparagine glycans are attached at residues Asn-161 and Asn-176. The chain crosses the membrane as a helical span at residues Val-179–Ile-199. The Cytoplasmic portion of the chain corresponds to Cys-200–Gln-229. Residues Thr-230–Trp-250 form a helical membrane-spanning segment. The Extracellular portion of the chain corresponds to Asn-251–Pro-258. Residues Val-259–Ile-279 form a helical membrane-spanning segment. Residues Trp-280–Pro-308 are Cytoplasmic-facing.

This sequence belongs to the G-protein coupled receptor T2R family.

The protein resides in the membrane. Its subcellular location is the cell projection. It is found in the cilium membrane. Its function is as follows. Receptor that may play a role in the perception of bitterness and is gustducin-linked. May play a role in sensing the chemical composition of the gastrointestinal content. The activity of this receptor may stimulate alpha gustducin, mediate PLC-beta-2 activation and lead to the gating of TRPM5. In airway epithelial cells, binding of bitter compounds increases the intracellular calcium ion concentration and stimulates ciliary beat frequency. This chain is Taste receptor type 2 member 46 (TAS2R46), found in Macaca mulatta (Rhesus macaque).